A 318-amino-acid chain; its full sequence is D-alanine--D-alanine ligase B (318 aa).

The ATP-grasp domain maps to 116–311 (KQVWQSLGIP…FQQLVLAILA (196 aa)). 142-197 (STELGFPLIVKPAHEGSSIGMAKVNSTQELVAAWQDAAKYDSQVLVEQWIHGPEFT) is a binding site for ATP. Residues Asp-265, Glu-278, and Asn-280 each contribute to the Mg(2+) site.

It belongs to the D-alanine--D-alanine ligase family. The cofactor is Mg(2+). Requires Mn(2+) as cofactor.

It is found in the cytoplasm. It catalyses the reaction 2 D-alanine + ATP = D-alanyl-D-alanine + ADP + phosphate + H(+). It participates in cell wall biogenesis; peptidoglycan biosynthesis. In terms of biological role, cell wall formation. The sequence is that of D-alanine--D-alanine ligase B from Pseudomonas putida (strain ATCC 47054 / DSM 6125 / CFBP 8728 / NCIMB 11950 / KT2440).